The chain runs to 78 residues: MAKTQNFVCFTAVLLILILVSTEIPMIEGKTCKLFRGECPVDPCEPEKCDECCKATFGKQICGKCEQESTELHCHCRR.

Positions 1–29 (MAKTQNFVCFTAVLLILILVSTEIPMIEG) are cleaved as a signal peptide. Cystine bridges form between C44–C65, C49–C74, and C53–C76.

This sequence belongs to the DEFL family.

Its subcellular location is the secreted. The polypeptide is Putative defensin-like protein 202 (Arabidopsis thaliana (Mouse-ear cress)).